The sequence spans 508 residues: CBL-interacting protein kinase 19 (508 aa).

Residues 1–24 (MAATPPSSQHRRPLSSSASAASLA) are disordered. Over residues 14 to 24 (LSSSASAASLA) the composition is skewed to low complexity. A Protein kinase domain is found at 37–291 (YELGRLLGHG…VKEVMESRWF (255 aa)). ATP is bound by residues 43–51 (LGHGTFAKV) and K66. D159 acts as the Proton acceptor in catalysis. The interval 177–206 (DFGLSAVADQFHPDGLLHTFCGTPSYVAPE) is activation loop. Positions 311–372 (ADGDNDMPEL…EERRQRPLGS (62 aa)) are disordered. The span at 313-322 (GDNDMPELEP) shows a compositional bias: acidic residues. Positions 323–337 (SEPPPPPPFPPPPPQ) are enriched in pro residues. Acidic residues predominate over residues 338–347 (QDDDGEESGW). The region spanning 354 to 398 (ASCPATLSSEERRQRPLGSLTRPASLNAFDIISFSKGFDLSGLFE) is the NAF domain. The interval 401 to 430 (GSEVRFISAEPMQTIITKLEEIAKVKSFFV) is PPI.

This sequence belongs to the protein kinase superfamily. CAMK Ser/Thr protein kinase family. SNF1 subfamily. The cofactor is Mn(2+). Autophosphorylated. Expressed in roots, leaf blades and sheaths and panicles.

The catalysed reaction is L-seryl-[protein] + ATP = O-phospho-L-seryl-[protein] + ADP + H(+). It catalyses the reaction L-threonyl-[protein] + ATP = O-phospho-L-threonyl-[protein] + ADP + H(+). CIPK serine-threonine protein kinases interact with CBL proteins. Binding of a CBL protein to the regulatory NAF domain of CIPK protein lead to the activation of the kinase in a calcium-dependent manner. This chain is CBL-interacting protein kinase 19 (CIPK19), found in Oryza sativa subsp. japonica (Rice).